An 842-amino-acid chain; its full sequence is MANILRKVIENDKGEIRKLEKIAKKVEAYADEMEALTDQELQAKTPEFKKRYQAGETLEDLLPEAFAVVREASRRVLGLYPYRVQIMGGVVLHNGDVPEMRTGEGKTLTATMPVYLNALAGEGVHVITVNEYLSTRDATEMGEVYSWLGLSVGINLAAKSPAEKREAYLCDITYSTNSEVGFDYLRDNMVVRQEDMVQRPLNFALVDEVDSVLIDEARTPLIVSGAVSSETNQLYVRADMFVKTLKEDDYIIDVPTKTIGLSDLGIDKAESYFNLNNLYDIDNVALTHFIDNALRANYIMLLDIDYVVSEDGEILIVDQFTGRTMEGRRFSDGLHQAIEAKEGVRIQEESKTSASITYQNMFRMYKKLAGMTGTAKTEEEEFREVYNMRIIPIPTNKPVARLDHTDLLYPTLASKFRAVIADVKARHEKGQPVLVGTVAVETSDYISKQLVAAGVPHEVLNAKNHFKEAQIIMNAGQRGAVTIATNMAGRGTDIKLGEGVRELGGLCVIGTERHESRRIDNQLRGRAGRQGDPGESQFYLSLEDDLMRRFGSDRIKAFLDRMRLEEEDAVIKSGMLARQVESAQKRVEGNNYDTRKQVLQYDDVMREQREIIYANRRDVITANRDLGPEIKAMIKRTIKRTVDAHARSNRNDAIDAIVAFARTNIVPEESISAKDLRSLKDDQIKEELYKRALAIYESQISKLHDQEAVLEFQKVLILMIVDNKWTEHIDALDQLRNSVGLRGYAQNNPVVEYQSEGFKMFQDMIGAIEFDVTRTMMKAQIHEQERERVSPNARTTAAQNIAAQSNQSSESSTQDYSHVKRNDLCPCGSGKKFKNCHGRKAF.

ATP-binding positions include Gln-85, 103 to 107 (GEGKT), and Asp-493. 4 residues coordinate Zn(2+): Cys-825, Cys-827, Cys-836, and His-837.

The protein belongs to the SecA family. Monomer and homodimer. Part of the essential Sec protein translocation apparatus which comprises SecA, SecYEG and auxiliary proteins SecDF. Other proteins may also be involved. Requires Zn(2+) as cofactor.

It localises to the cell membrane. Its subcellular location is the cytoplasm. The enzyme catalyses ATP + H2O + cellular proteinSide 1 = ADP + phosphate + cellular proteinSide 2.. Its function is as follows. Part of the Sec protein translocase complex. Interacts with the SecYEG preprotein conducting channel. Has a central role in coupling the hydrolysis of ATP to the transfer of proteins into and across the cell membrane, serving as an ATP-driven molecular motor driving the stepwise translocation of polypeptide chains across the membrane. The sequence is that of Protein translocase subunit SecA from Streptococcus uberis (strain ATCC BAA-854 / 0140J).